A 169-amino-acid polypeptide reads, in one-letter code: Zinc metalloproteinase-disintegrin-like mikarin (169 aa).

In terms of domain architecture, Peptidase M12B spans 14–57 (KYLEYVVVDNNMYRNYGNAGPCVMSAEISFEPLQEFSSCDIQEP). One can recognise a Disintegrin domain in the interval 65–129 (PAVCGNYYVE…PEICTGRSAK (65 aa)). Disulfide bonds link cysteine 68–cysteine 97, cysteine 79–cysteine 92, cysteine 81–cysteine 87, cysteine 105–cysteine 111, cysteine 110–cysteine 123, and cysteine 150–cysteine 161. The D/ECD-tripeptide signature appears at 116-118 (DCD).

It belongs to the venom metalloproteinase (M12B) family. P-III subfamily. P-IIIa sub-subfamily. In terms of assembly, monomer. The cofactor is Zn(2+). Expressed by the venom gland.

It localises to the secreted. Inhibited by EDTA, but not by PMSF. Snake venom zinc metalloproteinase that calcium-independently catalyzes the conversion of prothrombin (F2) to alpha-thrombin through the formation of a thrombin intermediate. The polypeptide is Zinc metalloproteinase-disintegrin-like mikarin (Micropechis ikaheca (New Guinean small-eyed snake)).